The following is a 496-amino-acid chain: Myotilin (496 aa).

A disordered region spans residues 1–37 (MFNYERPKHFIQPQNPCGSRLQPPGPEVSGFPSQTKQ). Arg20 carries the omega-N-methylarginine modification. Residues 78-149 (PNPGQKVTAT…PTPKTPDHEI (72 aa)) form a necessary for interaction with ACTN1 region. Polar residues-rich tracts occupy residues 202–213 (NSDVQDSPQHNP) and 221–233 (PTSQ…SSRA). The disordered stretch occupies residues 202-239 (NSDVQDSPQHNPEQARLHVPTSQVRSRSSSRAEANDQD). The necessary for interaction with FLNC stretch occupies residues 213–491 (PEQARLHVPT…QRLAAQSGLY (279 aa)). The interval 213–496 (PEQARLHVPT…QSGLYESEEL (284 aa)) is necessary for interaction with ACTA1. Ig-like C2-type domains lie at 248–333 (PRFI…ATFT) and 347–439 (PMFI…LDVT).

The protein belongs to the myotilin/palladin family. Homodimer. Interacts with ACTA1, ACTN1, FLNA, FLNB, FLNC, and MYOZ2. Interacts with the C-terminal region of MYOZ1. In terms of tissue distribution, expressed in skeletal muscle (at protein level).

The protein resides in the cell membrane. The protein localises to the sarcolemma. It localises to the cytoplasm. It is found in the cytoskeleton. Its subcellular location is the myofibril. The protein resides in the sarcomere. The protein localises to the z line. Its function is as follows. Component of a complex of multiple actin cross-linking proteins. Involved in the control of myofibril assembly and stability at the Z lines in muscle cells. The chain is Myotilin (Myot) from Mus musculus (Mouse).